We begin with the raw amino-acid sequence, 415 residues long: Tyrosine--tRNA ligase (415 aa).

A 'HIGH' region motif is present at residues 54-63 (PTGSNIHLGH). A 'KMSKS' region motif is present at residues 248-252 (KMSKS). An ATP-binding site is contributed by lysine 251. In terms of domain architecture, S4 RNA-binding spans 351–415 (AKAFYLLSAV…GKKTFRRLTA (65 aa)).

Belongs to the class-I aminoacyl-tRNA synthetase family. TyrS type 2 subfamily. Homodimer.

It is found in the cytoplasm. It carries out the reaction tRNA(Tyr) + L-tyrosine + ATP = L-tyrosyl-tRNA(Tyr) + AMP + diphosphate + H(+). Catalyzes the attachment of tyrosine to tRNA(Tyr) in a two-step reaction: tyrosine is first activated by ATP to form Tyr-AMP and then transferred to the acceptor end of tRNA(Tyr). The sequence is that of Tyrosine--tRNA ligase from Parasynechococcus marenigrum (strain WH8102).